The sequence spans 293 residues: MGSRAELCTLLGGFSFLLLLIPGEGAKGGSLRESQGVCSKQTLVVPLHYNESYSQPVYKPYLTLCAGRRICSTYRTMYRVMWREVRREVQQTHAVCCQGWKKRHPGALTCEAICAKPCLNGGVCVRPDQCECAPGWGGKHCHVDVDECRTSITLCSHHCFNTAGSFTCGCPHDLVLGVDGRTCMEGSPEPPTSASILSVAVREAEKDERALKQEIHELRGRLERLEQWAGQAGAWVRAVLPVPPEELQPEQVAELWGRGDRIESLSDQVLLLEERLGACSCEDNSLGLGVNHR.

The signal sequence occupies residues 1–25 (MGSRAELCTLLGGFSFLLLLIPGEG). One can recognise an EMI domain in the interval 34–112 (SQGVCSKQTL…RHPGALTCEA (79 aa)). Disulfide bonds link Cys38-Cys97, Cys65-Cys71, Cys96-Cys110, Cys114-Cys124, Cys118-Cys130, Cys132-Cys141, Cys148-Cys159, Cys155-Cys168, and Cys170-Cys183. Asn50 carries an N-linked (GlcNAc...) asparagine glycan. An EGF-like 1 domain is found at 111 to 142 (EAICAKPCLNGGVCVRPDQCECAPGWGGKHCH). The EGF-like 2; calcium-binding domain occupies 144–184 (DVDECRTSITLCSHHCFNTAGSFTCGCPHDLVLGVDGRTCM). The stretch at 195-232 (SILSVAVREAEKDERALKQEIHELRGRLERLEQWAGQA) forms a coiled coil.

The protein resides in the secreted. This chain is Epidermal growth factor-like protein 8 (EGFL8), found in Homo sapiens (Human).